A 522-amino-acid chain; its full sequence is Zinc finger and BTB domain-containing protein 18 (522 aa).

The BTB domain maps to 24 to 91; the sequence is CDCTVLVGDA…MYEGKLQFKD (68 aa). Positions 121-143 are enriched in basic and acidic residues; the sequence is ATTEADSTKKEEDASSCSDKVES. The segment at 121-165 is disordered; sequence ATTEADSTKKEEDASSCSDKVESLSDGSSHMAGDLPSDEDEGEDE. The residue at position 157 (Ser-157) is a Phosphoserine. Residue Lys-273 forms a Glycyl lysine isopeptide (Lys-Gly) (interchain with G-Cter in SUMO2) linkage. The interaction with DNMT3A stretch occupies residues 310–427; that stretch reads EPAHLAPLRE…TFSCMYTLKR (118 aa). 4 consecutive C2H2-type zinc fingers follow at residues 370 to 392, 410 to 432, 438 to 460, and 466 to 489; these read FMCP…LSTH, PTCS…ERTH, YTCT…AVVH, and HACK…RKFH. Residues Ser-516 and Ser-517 each carry the phosphoserine modification.

The protein belongs to the krueppel C2H2-type zinc-finger protein family. ZBTB18 subfamily. In terms of assembly, interacts with DNMT3A.

It localises to the nucleus. Its function is as follows. Transcriptional repressor that plays a role in various developmental processes such as myogenesis and brain development. Specifically binds the consensus DNA sequence 5'-[AC]ACATCTG[GT][AC]-3' which contains the E box core, and acts by recruiting chromatin remodeling multiprotein complexes. Plays a key role in myogenesis by directly repressing the expression of ID2 and ID3, 2 inhibitors of skeletal myogenesis. Also involved in controlling cell division of progenitor cells and regulating the survival of postmitotic cortical neurons. May also play a role in the organization of chromosomes in the nucleus. This is Zinc finger and BTB domain-containing protein 18 (ZBTB18) from Bos taurus (Bovine).